A 318-amino-acid chain; its full sequence is NADH-ubiquinone oxidoreductase chain 1 (318 aa).

8 helical membrane-spanning segments follow: residues F2–L22, I68–P88, L100–G120, L146–I166, H171–A191, L222–F242, E253–V273, and F293–G313.

The protein belongs to the complex I subunit 1 family. Core subunit of respiratory chain NADH dehydrogenase (Complex I) which is composed of 45 different subunits.

It localises to the mitochondrion inner membrane. The enzyme catalyses a ubiquinone + NADH + 5 H(+)(in) = a ubiquinol + NAD(+) + 4 H(+)(out). Functionally, core subunit of the mitochondrial membrane respiratory chain NADH dehydrogenase (Complex I) which catalyzes electron transfer from NADH through the respiratory chain, using ubiquinone as an electron acceptor. Essential for the catalytic activity and assembly of complex I. The protein is NADH-ubiquinone oxidoreductase chain 1 (MT-ND1) of Hipposideros armiger terasensis (Formosan leaf-nosed bat).